Consider the following 164-residue polypeptide: MGMNHQQEKTPFLIAPLEKLVNWARSNSLWPAQFGLACCAIEMMSTAASRYDLARFGMEVFRASPRQSDVMIVAGRVSQKMAPVLQTIYEQMLEPKWVIAMGDCASCGGVYNNYAIIQGVDKLVPVDVYLAGCPPRPEALIDALIMLQNKIKYGDSSKKGKRHL.

Residues cysteine 38, cysteine 39, cysteine 104, and cysteine 133 each contribute to the [4Fe-4S] cluster site.

This sequence belongs to the complex I 20 kDa subunit family. NDH-1 is composed of 14 different subunits. Subunits NuoB, C, D, E, F, and G constitute the peripheral sector of the complex. [4Fe-4S] cluster serves as cofactor.

It localises to the cell inner membrane. It carries out the reaction a quinone + NADH + 5 H(+)(in) = a quinol + NAD(+) + 4 H(+)(out). NDH-1 shuttles electrons from NADH, via FMN and iron-sulfur (Fe-S) centers, to quinones in the respiratory chain. The immediate electron acceptor for the enzyme in this species is believed to be ubiquinone. Couples the redox reaction to proton translocation (for every two electrons transferred, four hydrogen ions are translocated across the cytoplasmic membrane), and thus conserves the redox energy in a proton gradient. The chain is NADH-quinone oxidoreductase subunit B from Protochlamydia amoebophila (strain UWE25).